The sequence spans 420 residues: tRNA(Ile)-lysidine synthase, chloroplastic (420 aa).

63–68 contributes to the ATP binding site; sequence SGGQDS.

This sequence belongs to the tRNA(Ile)-lysidine synthase family.

The protein localises to the plastid. Its subcellular location is the chloroplast. It catalyses the reaction cytidine(34) in tRNA(Ile2) + L-lysine + ATP = lysidine(34) in tRNA(Ile2) + AMP + diphosphate + H(+). Its function is as follows. Ligates lysine onto the cytidine present at position 34 of the AUA codon-specific tRNA(Ile) that contains the anticodon CAU, in an ATP-dependent manner. Cytidine is converted to lysidine, thus changing the amino acid specificity of the tRNA from methionine to isoleucine. The protein is tRNA(Ile)-lysidine synthase, chloroplastic of Zygnema circumcarinatum (Green alga).